The sequence spans 426 residues: MAFIALGINHKTASVEVRERVAFTPEQLVEALQQLCRLTPSREAAILSTCNRSELYLEQDQLSSDEVLKWLADYHRLSLDELRACAYVHSEQDAVRHMMRVACGLDSMVLGEPQILGQLKSAYAVAREAGTVGPLLGRLFQATFSTAKTVRTDTAIGENPVSVAFAAVSLAKQIFADLHRSQALLIGAGETISLVARHLHDQGIKRIVVANRTLERASQLAEQFGAHAVLLSDIPDELAHSDIVISSTASQLPILGKGAVESALKKRKHKPIFMVDIAVPRDIEPQVGELDDVYLYTVDDLHEVIEENLKSRQGAAQAAEELVAAGTEDFMQRLRELAAVDVLKAYRQQAERLRDEELAKAQRMLVNGASAEDVLAQLARGLTNKLLHAPSVRMKKLTAEGRIDALSLAQELFALDEGAPQDKGLQ.

Residues 49-52 (TCNR), Ser-107, 112-114 (EPQ), and Gln-118 each bind substrate. Cys-50 (nucleophile) is an active-site residue. Position 187-192 (187-192 (GAGETI)) interacts with NADP(+).

The protein belongs to the glutamyl-tRNA reductase family. As to quaternary structure, homodimer.

The enzyme catalyses (S)-4-amino-5-oxopentanoate + tRNA(Glu) + NADP(+) = L-glutamyl-tRNA(Glu) + NADPH + H(+). The protein operates within porphyrin-containing compound metabolism; protoporphyrin-IX biosynthesis; 5-aminolevulinate from L-glutamyl-tRNA(Glu): step 1/2. Functionally, catalyzes the NADPH-dependent reduction of glutamyl-tRNA(Glu) to glutamate 1-semialdehyde (GSA). The sequence is that of Glutamyl-tRNA reductase from Ectopseudomonas mendocina (strain ymp) (Pseudomonas mendocina).